The chain runs to 1001 residues: 26S proteasome non-ATPase regulatory subunit 1 homolog B (1001 aa).

A2 is subject to N-acetylalanine. Residue K166 forms a Glycyl lysine isopeptide (Lys-Gly) (interchain with G-Cter in ubiquitin) linkage. PC repeat units lie at residues 412–447 (SATA…GGSP), 452–485 (GALY…EVIQ), 487–521 (GACL…VAGE), 522–555 (AAGI…EKII), 557–590 (GLAL…IIRY), 591–626 (GGMY…DVRR), 627–659 (TAVL…PHVR), 661–695 (GAAL…FVRQ), 696–736 (GALI…DTMS), and 739–771 (GAIL…TAVI). 2 disordered regions span residues 853 to 896 (AKKE…TVEK) and 954 to 1001 (SLTD…YASP). The segment covering 854-863 (KKEAEQKAKA) has biased composition (basic and acidic residues). S889 is subject to Phosphoserine. Residues 961 to 985 (STASPAVGAEAAGQAQQAATTSAMA) show a composition bias toward low complexity.

The protein belongs to the proteasome subunit S1 family. As to quaternary structure, component of the 19S regulatory particle (RP/PA700) base subcomplex of the 26S proteasome. The 26S proteasome is composed of a core protease (CP), known as the 20S proteasome, capped at one or both ends by the 19S regulatory particle (RP/PA700). The RP/PA700 complex is composed of at least 17 different subunits in two subcomplexes, the base and the lid, which form the portions proximal and distal to the 20S proteolytic core, respectively.

Acts as a regulatory subunit of the 26 proteasome which is involved in the ATP-dependent degradation of ubiquitinated proteins. The sequence is that of 26S proteasome non-ATPase regulatory subunit 1 homolog B (RPN2B) from Arabidopsis thaliana (Mouse-ear cress).